We begin with the raw amino-acid sequence, 348 residues long: Ion-translocating oxidoreductase complex subunit D (348 aa).

Residues methionine 1–arginine 22 are Cytoplasmic-facing. Transmembrane regions (helical) follow at residues tryptophan 23–threonine 43 and leucine 44–leucine 64. Residues arginine 65–serine 71 are Cytoplasmic-facing. The chain crosses the membrane as a helical span at residues alanine 72–proline 91. Topologically, residues leucine 92 to proline 94 are periplasmic. The chain crosses the membrane as a helical span at residues tryptophan 95–glycine 117. Topologically, residues glutamine 118–methionine 125 are cytoplasmic. A helical membrane pass occupies residues isoleucine 126–isoleucine 146. Residues lysine 147–glycine 213 are Periplasmic-facing. The residue at position 187 (threonine 187) is an FMN phosphoryl threonine. The helical transmembrane segment at phenylalanine 214–leucine 234 threads the bilayer. Residues lysine 235–histidine 242 lie on the Cytoplasmic side of the membrane. Residues isoleucine 243–proline 263 form a helical membrane-spanning segment. The Periplasmic portion of the chain corresponds to glycine 264–threonine 265. A helical membrane pass occupies residues threonine 266–alanine 286. Over threonine 287–arginine 299 the chain is Cytoplasmic. Helical transmembrane passes span leucine 300–proline 320 and aspartate 321–threonine 341. The Cytoplasmic portion of the chain corresponds to lysine 342 to histidine 348.

The protein belongs to the NqrB/RnfD family. In terms of assembly, the complex is composed of six subunits: RnfA, RnfB, RnfC, RnfD, RnfE and RnfG. FMN is required as a cofactor.

It is found in the cell inner membrane. Part of a membrane-bound complex that couples electron transfer with translocation of ions across the membrane. This Vibrio cholerae serotype O1 (strain ATCC 39541 / Classical Ogawa 395 / O395) protein is Ion-translocating oxidoreductase complex subunit D.